The following is a 486-amino-acid chain: Glycogen synthase (486 aa).

Residue Lys15 participates in ADP-alpha-D-glucose binding.

The protein belongs to the glycosyltransferase 1 family. Bacterial/plant glycogen synthase subfamily.

It catalyses the reaction [(1-&gt;4)-alpha-D-glucosyl](n) + ADP-alpha-D-glucose = [(1-&gt;4)-alpha-D-glucosyl](n+1) + ADP + H(+). The protein operates within glycan biosynthesis; glycogen biosynthesis. Its function is as follows. Synthesizes alpha-1,4-glucan chains using ADP-glucose. The protein is Glycogen synthase of Thermotoga petrophila (strain ATCC BAA-488 / DSM 13995 / JCM 10881 / RKU-1).